The chain runs to 204 residues: N-alpha-acetyltransferase 40 (204 aa).

In terms of domain architecture, N-acetyltransferase spans Glu-39 to Lys-202. Residues Tyr-64, Thr-107–Glu-109, and Tyr-118 contribute to the substrate site. Acetyl-CoA-binding positions include Ile-120–Leu-122 and Gly-128–Lys-133. A substrate-binding site is contributed by Thr-154. An acetyl-CoA-binding site is contributed by Asn-159. Residue Ser-176 participates in substrate binding.

It belongs to the acetyltransferase family. NAA40 subfamily.

It is found in the cytoplasm. The protein resides in the nucleus. The enzyme catalyses N-terminal L-seryl-[histone H4] + acetyl-CoA = N-terminal N(alpha)-acetyl-L-seryl-[histone H4] + CoA + H(+). The catalysed reaction is N-terminal L-seryl-[histone H2A] + acetyl-CoA = N-terminal N(alpha)-acetyl-L-seryl-[histone H2A] + CoA + H(+). Functionally, N-alpha-acetyltransferase that specifically mediates the acetylation of the N-terminal residues of histones H4 and H2A. This chain is N-alpha-acetyltransferase 40, found in Schizosaccharomyces pombe (strain 972 / ATCC 24843) (Fission yeast).